An 82-amino-acid polypeptide reads, in one-letter code: Sodium channel neurotoxin MeuNaTxalpha-3 (82 aa).

A signal peptide spans 1–8 (LVMAGVES). An LCN-type CS-alpha/beta domain is found at 10-80 (RDGHIARNNN…VPIKVPGDCH (71 aa)). 4 cysteine pairs are disulfide-bonded: Cys20–Cys79, Cys24–Cys52, Cys38–Cys62, and Cys42–Cys64.

Expressed by the venom gland.

The protein resides in the secreted. Functionally, alpha toxins bind voltage-independently at site-3 of sodium channels (Nav) and inhibit the inactivation of the activated channels, thereby blocking neuronal transmission. The chain is Sodium channel neurotoxin MeuNaTxalpha-3 from Mesobuthus eupeus (Lesser Asian scorpion).